A 564-amino-acid polypeptide reads, in one-letter code: DNA ligase B (564 aa).

Lys130 functions as the N6-AMP-lysine intermediate in the catalytic mechanism.

The protein belongs to the NAD-dependent DNA ligase family. LigB subfamily.

The catalysed reaction is NAD(+) + (deoxyribonucleotide)n-3'-hydroxyl + 5'-phospho-(deoxyribonucleotide)m = (deoxyribonucleotide)n+m + AMP + beta-nicotinamide D-nucleotide.. In terms of biological role, catalyzes the formation of phosphodiester linkages between 5'-phosphoryl and 3'-hydroxyl groups in double-stranded DNA using NAD as a coenzyme and as the energy source for the reaction. The polypeptide is DNA ligase B (Klebsiella pneumoniae subsp. pneumoniae (strain ATCC 700721 / MGH 78578)).